The primary structure comprises 509 residues: Glycogen synthase (509 aa).

Residue Lys47 participates in ADP-alpha-D-glucose binding.

It belongs to the glycosyltransferase 1 family. Bacterial/plant glycogen synthase subfamily.

It catalyses the reaction [(1-&gt;4)-alpha-D-glucosyl](n) + ADP-alpha-D-glucose = [(1-&gt;4)-alpha-D-glucosyl](n+1) + ADP + H(+). The protein operates within glycan biosynthesis; glycogen biosynthesis. Synthesizes alpha-1,4-glucan chains using ADP-glucose. In Xanthomonas oryzae pv. oryzae (strain PXO99A), this protein is Glycogen synthase.